The sequence spans 140 residues: ATP synthase epsilon chain (140 aa).

Belongs to the ATPase epsilon chain family. F-type ATPases have 2 components, CF(1) - the catalytic core - and CF(0) - the membrane proton channel. CF(1) has five subunits: alpha(3), beta(3), gamma(1), delta(1), epsilon(1). CF(0) has three main subunits: a, b and c.

It localises to the cell inner membrane. Produces ATP from ADP in the presence of a proton gradient across the membrane. In Neisseria meningitidis serogroup B (strain ATCC BAA-335 / MC58), this protein is ATP synthase epsilon chain.